We begin with the raw amino-acid sequence, 343 residues long: Autoinducer 2 import system permease protein LsrC (343 aa).

Helical transmembrane passes span 13–33, 38–58, 61–81, 92–112, 114–134, 154–174, 212–232, 251–271, and 283–303; these read FLAILALFGVLVALNPAYLSF, MIFASSQILILLALGAALVML, NIDVSVGSTVGLCAIAVGVAL, LFALAIGALAGAFNGLLVVGL, IPAIVATLGTLGLYRGAMLLW, VALGVSPLGMAVLFLVLIGAW, INGMLAACAGIVFASQIGFVP, GISLLGGTGTLIGAFLGAFFL, and LPAWWNDFIAGLVLLGVLVLD. The segment at 321 to 343 is disordered; the sequence is RFQPGNKGGKHVTPFPKRKKEVA.

Belongs to the binding-protein-dependent transport system permease family. AraH/RbsC subfamily. The complex is composed of two ATP-binding proteins (LsrA), two transmembrane proteins (LsrC and LsrD) and a solute-binding protein (LsrB).

The protein resides in the cell inner membrane. Functionally, part of the ABC transporter complex LsrABCD involved in autoinducer 2 (AI-2) import. Probably responsible for the translocation of the substrate across the membrane. The chain is Autoinducer 2 import system permease protein LsrC (lsrC) from Enterobacter sp. (strain 638).